The chain runs to 700 residues: MARKTPIERYRNIGISAHIDAGKTTTTERILFYTGVNHKIGEVHDGAATMDWMEQEQERGITITSAATTAFWKGMGGNYPEHRINIIDTPGHVDFTIEVERSMRVLDGACMVYCAVGGVQPQSETVWRQANKYKVPRLAFVNKMDRTGANFFKVYDQLRLRLKANPVPVVVPIGAEENFKGVVDLIKMKAIIWDEASQGTKFDYVDIPAELAETCKEWREKMVEVAAEASEDLMNKYLEEGDLPEADIVKALRDRTIACEIQPMLCGTAFKNKGVQRMLDAVIDFLPSPVDIPPVKGELENGEEAERKASDEEKFSSLAFKIMTDPFVGQLIFFRVYSGVVNSGDTLLNSTKGKKERLGRILQMHANQREEIKEVRAGDIAAAVGLKEATTGDTLCDPANPIVLERMVFPEPVISQAVEPKTKADQEKMGLALNRLAQEDPSFRVQTDEESGQTIISGMGELHLEILVDRMKREFGVEATVGKPQVAYRETIRSTAKDVDGKFVKQSGGRGQYGHAVITLEPNEQGKGYEFFDEIKGGVIPREYIPAVDKGIQDTLKSGVLAGFPVVDVKVHLTFGSYHDVDSNENAFRMAGSMAFKEAMRKANPVVLEPMMAVEVETPEDYMGNVMGDLSGRRGIVQGMEDMVGGGKIVRAEVPLSEMFGYSTSLRSLAQGRATYTMEFKHYAEAPRNVAEAIISAKSK.

The region spanning 8–290 (ERYRNIGISA…AVIDFLPSPV (283 aa)) is the tr-type G domain. GTP contacts are provided by residues 17 to 24 (AHIDAGKT), 88 to 92 (DTPGH), and 142 to 145 (NKMD).

Belongs to the TRAFAC class translation factor GTPase superfamily. Classic translation factor GTPase family. EF-G/EF-2 subfamily.

The protein localises to the cytoplasm. Functionally, catalyzes the GTP-dependent ribosomal translocation step during translation elongation. During this step, the ribosome changes from the pre-translocational (PRE) to the post-translocational (POST) state as the newly formed A-site-bound peptidyl-tRNA and P-site-bound deacylated tRNA move to the P and E sites, respectively. Catalyzes the coordinated movement of the two tRNA molecules, the mRNA and conformational changes in the ribosome. In Burkholderia orbicola (strain AU 1054), this protein is Elongation factor G 2.